We begin with the raw amino-acid sequence, 853 residues long: MSAIENFDAHTPMMQQYLKLKAQHPEILLFYRMGDFYELFYDDAKRASQLLDISLTKRGASAGEPIPMAGIPYHAVENYLAKLVNQGESVAICEQIGDPATSKGPVERKVVRIVTPGTISDEALLQERQDNLLAAIWQDSKGFGYATLDISSGRFRLSEPADRETMAAELQRTNPAELLYAEDFAEMSLIEGRRGLRRRPLWEFEIDTARQQLNLQFGTRDLVGFGVENAPRGLCAAGCLLQYAKDTQRTTLPHIRSITMEREQDSIIMDAATRRNLEITQNLAGGAENTLASVLDCTVTPMGSRMLKRWLHMPVRDTRVLLERQQTIGALQDFTAELQPVLRQVGDLERILARLALRTARPRDLARMRHAFQQLPELRAQLENVDSAPVQALREKMGEFAELRDLLERAIIDTPPVLVRDGGVIASGYNEELDEWRALADGATDYLERLEVRERERTGLDTLKVGFNAVHGYYIQISRGQSHLAPINYMRRQTLKNAERYIIPELKEYEDKVLTSKGKALALEKQLYEELFDLLLPHLEALQQSASALAELDVLVNLAERAYTLNYTCPTFIDKPGIRITEGRHPVVEQVLNEPFIANPLNLSPQRRMLIITGPNMGGKSTYMRQTALIALMAYIGSYVPAQKVEIGPIDRIFTRVGAADDLASGRSTFMVEMTETANILHNATEYSLVLMDEIGRGTSTYDGLSLAWACAENLANKIKALTLFATHYFELTQLPEKMEGVANVHLDALEHGDTIAFMHSVQDGAASKSYGLAVAALAGVPKEVIKRARQKLRELESISPNAAATQVDGTQMSLLSVPEETSPAVEALENLDPDSLTPRQALEWIYRLKSLV.

614-621 serves as a coordination point for ATP; it reads GPNMGGKS.

It belongs to the DNA mismatch repair MutS family.

This protein is involved in the repair of mismatches in DNA. It is possible that it carries out the mismatch recognition step. This protein has a weak ATPase activity. This is DNA mismatch repair protein MutS from Escherichia fergusonii (strain ATCC 35469 / DSM 13698 / CCUG 18766 / IAM 14443 / JCM 21226 / LMG 7866 / NBRC 102419 / NCTC 12128 / CDC 0568-73).